The following is a 260-amino-acid chain: Proteasome subunit alpha type-1 (260 aa).

Residues 231–260 form a disordered region; sequence FLEGLEERPQRKPALPADEPAEKAEEPMEH. The segment covering 250–260 has biased composition (basic and acidic residues); sequence PAEKAEEPMEH.

It belongs to the peptidase T1A family. As to quaternary structure, the 26S proteasome consists of a 20S proteasome core and two 19S regulatory subunits. The 20S proteasome core is a barrel-shaped complex made of 28 subunits that are arranged in four stacked rings. The two outer rings are each formed by seven alpha subunits, and the two inner rings are formed by seven beta subunits. The proteolytic activity is exerted by three beta-subunits PSMB5, PSMB6 and PSMB7.

The protein localises to the cytoplasm. Its subcellular location is the nucleus. Component of the 20S core proteasome complex involved in the proteolytic degradation of most intracellular proteins. This complex plays numerous essential roles within the cell by associating with different regulatory particles. Associated with two 19S regulatory particles, forms the 26S proteasome and thus participates in the ATP-dependent degradation of ubiquitinated proteins. The 26S proteasome plays a key role in the maintenance of protein homeostasis by removing misfolded or damaged proteins that could impair cellular functions, and by removing proteins whose functions are no longer required. Associated with the PA200 or PA28, the 20S proteasome mediates ubiquitin-independent protein degradation. This type of proteolysis is required in several pathways including spermatogenesis (20S-PA200 complex) or generation of a subset of MHC class I-presented antigenic peptides (20S-PA28 complex). In Gallus gallus (Chicken), this protein is Proteasome subunit alpha type-1 (PSMA1).